The primary structure comprises 115 residues: Large ribosomal subunit protein bL19 (115 aa).

This sequence belongs to the bacterial ribosomal protein bL19 family.

This protein is located at the 30S-50S ribosomal subunit interface and may play a role in the structure and function of the aminoacyl-tRNA binding site. The protein is Large ribosomal subunit protein bL19 of Streptococcus thermophilus (strain CNRZ 1066).